The sequence spans 606 residues: NADH-ubiquinone oxidoreductase chain 5 (606 aa).

16 helical membrane passes run 1–21 (MNLFTSFTLLTLLILTTPIMM), 35–55 (YVKNIVFCAFITSLVPAMVYL), 87–107 (LMFMPVALFITWSIMEFSMWY), 114–134 (INQFFKYLLLFLITMLILVTA), 140–160 (LFIGWEGVGIMSFLLIGWWFG), 171–191 (AILYNRIGDIGLLASMAWFLS), 211–233 (FPLMGLVLAAAGKSAQFGLHPWL), 241–261 (TPVSALLHSSTMVVAGIFLLV), 272–292 (LIQTVTLCLGAITTLFTAICA), 301–320 (IIAFSTSSQLGLMMVTIGLN), 325–347 (AFLHICTHAFFKAMLFLCSGSII), 366–386 (LPFTTTALIIGCLALTGMPFL), 413–433 (LIATSLTAVYSTRIIFFALLG), 457–477 (LLVGSIFAGFILSNSIPPMTT), 482–502 (MPLHLKLTALAMTTLGFIIAF), and 582–602 (GLIKLYFLSFLITITLSMILF).

This sequence belongs to the complex I subunit 5 family. Core subunit of respiratory chain NADH dehydrogenase (Complex I) which is composed of 45 different subunits.

Its subcellular location is the mitochondrion inner membrane. The enzyme catalyses a ubiquinone + NADH + 5 H(+)(in) = a ubiquinol + NAD(+) + 4 H(+)(out). Its function is as follows. Core subunit of the mitochondrial membrane respiratory chain NADH dehydrogenase (Complex I) which catalyzes electron transfer from NADH through the respiratory chain, using ubiquinone as an electron acceptor. Essential for the catalytic activity and assembly of complex I. This chain is NADH-ubiquinone oxidoreductase chain 5 (MT-ND5), found in Balaenoptera physalus (Fin whale).